Here is a 142-residue protein sequence, read N- to C-terminus: Anti-sigma F factor (142 aa).

Belongs to the anti-sigma-factor family.

It carries out the reaction L-seryl-[protein] + ATP = O-phospho-L-seryl-[protein] + ADP + H(+). The enzyme catalyses L-threonyl-[protein] + ATP = O-phospho-L-threonyl-[protein] + ADP + H(+). Functionally, binds to sigma F and blocks its ability to form an RNA polymerase holoenzyme (E-sigma F). Phosphorylates SpoIIAA on a serine residue. This phosphorylation may enable SpoIIAA to act as an anti-anti-sigma factor that counteracts SpoIIAB and thus releases sigma F from inhibition. The polypeptide is Anti-sigma F factor (Clostridium kluyveri (strain NBRC 12016)).